Reading from the N-terminus, the 39-residue chain is Photosystem II reaction center protein J (39 aa).

A helical transmembrane segment spans residues 7–27 (IPLWIVAVVAGLGVITVVGLF).

Belongs to the PsbJ family. PSII is composed of 1 copy each of membrane proteins PsbA, PsbB, PsbC, PsbD, PsbE, PsbF, PsbH, PsbI, PsbJ, PsbK, PsbL, PsbM, PsbT, PsbX, PsbY, PsbZ, Psb30/Ycf12, peripheral proteins PsbO, CyanoQ (PsbQ), PsbU, PsbV and a large number of cofactors. It forms dimeric complexes.

Its subcellular location is the cellular thylakoid membrane. Its function is as follows. One of the components of the core complex of photosystem II (PSII). PSII is a light-driven water:plastoquinone oxidoreductase that uses light energy to abstract electrons from H(2)O, generating O(2) and a proton gradient subsequently used for ATP formation. It consists of a core antenna complex that captures photons, and an electron transfer chain that converts photonic excitation into a charge separation. In Synechococcus sp. (strain JA-2-3B'a(2-13)) (Cyanobacteria bacterium Yellowstone B-Prime), this protein is Photosystem II reaction center protein J.